The sequence spans 266 residues: Undecaprenyl-diphosphatase (266 aa).

8 helical membrane-spanning segments follow: residues 4-24 (ILSAIILGIIQGITEFLPISS), 39-59 (LSIIFDIYLHLATVLVIIIYY), 86-106 (LKLILLILIITIVTGVVGTFI), 112-132 (MFTLSFVLINFIITGILILML), 145-165 (ILLAGIFMGLMQGLGALPGIS), 182-202 (KSAFEISFLSLIPIVFGAILL), 210-230 (IFMVLNFFEINLGALVAFVVG), and 246-266 (LYYFSIYLFALSIIVCYFVRI).

It belongs to the UppP family.

It localises to the cell inner membrane. It catalyses the reaction di-trans,octa-cis-undecaprenyl diphosphate + H2O = di-trans,octa-cis-undecaprenyl phosphate + phosphate + H(+). Catalyzes the dephosphorylation of undecaprenyl diphosphate (UPP). Confers resistance to bacitracin. This is Undecaprenyl-diphosphatase from Borreliella burgdorferi (strain ATCC 35210 / DSM 4680 / CIP 102532 / B31) (Borrelia burgdorferi).